Consider the following 813-residue polypeptide: Valine--tRNA ligase (813 aa).

Residues 46-56 (PTVSGQLHIGH) carry the 'HIGH' region motif. The short motif at 536–540 (KMSKS) is the 'KMSKS' region element. An ATP-binding site is contributed by Lys-539.

This sequence belongs to the class-I aminoacyl-tRNA synthetase family. ValS type 2 subfamily. Monomer.

Its subcellular location is the cytoplasm. It carries out the reaction tRNA(Val) + L-valine + ATP = L-valyl-tRNA(Val) + AMP + diphosphate. Catalyzes the attachment of valine to tRNA(Val). As ValRS can inadvertently accommodate and process structurally similar amino acids such as threonine, to avoid such errors, it has a 'posttransfer' editing activity that hydrolyzes mischarged Thr-tRNA(Val) in a tRNA-dependent manner. The protein is Valine--tRNA ligase of Rickettsia canadensis (strain McKiel).